The primary structure comprises 125 residues: CLAVATA3/ESR (CLE)-related protein ESR3 (125 aa).

The first 26 residues, 1–26 (MASRMGMVAIMSLFVYAIVVPTSVNA), serve as a signal peptide directing secretion. The disordered stretch occupies residues 45–125 (QQQGGFIGHR…IGPPPLPDRY (81 aa)). Hydroxyproline is present on residues proline 75 and proline 78. O-linked (Ara...) hydroxyproline glycosylation occurs at proline 78.

The protein belongs to the CLV3/ESR signal peptide family. The O-glycosylation (arabinosylation) of the hydroxyproline Pro-78 enhances binding affinity of the ESR3p peptide for its receptor. As to expression, seed endosperm.

It localises to the secreted. The protein localises to the extracellular space. Functionally, extracellular signal peptide that regulates cell fate. The sequence is that of CLAVATA3/ESR (CLE)-related protein ESR3 from Zea mays (Maize).